The sequence spans 45 residues: Metallothionein-like protein 1A (45 aa).

Belongs to the metallothionein superfamily. Type 15 family. Expressed in phloem and mesophyll cells of leaves, vascular tissues of cotyledons, sepals and petals. Expressed in anthers. Expressed in root endodermis and at lower levels in cortex of mature region of roots.

Its function is as follows. Metallothioneins have a high content of cysteine residues that bind various heavy metals. Functions as a metal chelator of copper (Cu) and zinc (Zn). Plays a role in Cu homeostasis in the roots under elevated Cu concentration. Functions cooperatively with the phytochelatin synthase PCS1 to protect plants from Cu and cadmium (Cd) toxicity. Plays a role in Cu homeostasis, specifically in the remobilization of Cu from senescing leaves. The mobilization of Cu from internal sources is important for seed development. Confers tolerance to Cd and plays a role in Cd and Zn homeostasis. This is Metallothionein-like protein 1A (MT1A) from Arabidopsis thaliana (Mouse-ear cress).